We begin with the raw amino-acid sequence, 205 residues long: ATP synthase subunit b 1 (205 aa).

Positions 1 to 15 (MFVSTAFAQTATESQ) are enriched in polar residues. Positions 1-26 (MFVSTAFAQTATESQPAPAAGEHGAA) are disordered. The span at 16-26 (PAPAAGEHGAA) shows a compositional bias: low complexity. A helical membrane pass occupies residues 56-78 (SQILWLAITFGLFYLFMSRVVLP).

Belongs to the ATPase B chain family. In terms of assembly, F-type ATPases have 2 components, F(1) - the catalytic core - and F(0) - the membrane proton channel. F(1) has five subunits: alpha(3), beta(3), gamma(1), delta(1), epsilon(1). F(0) has three main subunits: a(1), b(2) and c(10-14). The alpha and beta chains form an alternating ring which encloses part of the gamma chain. F(1) is attached to F(0) by a central stalk formed by the gamma and epsilon chains, while a peripheral stalk is formed by the delta and b chains.

It localises to the cell inner membrane. Functionally, f(1)F(0) ATP synthase produces ATP from ADP in the presence of a proton or sodium gradient. F-type ATPases consist of two structural domains, F(1) containing the extramembraneous catalytic core and F(0) containing the membrane proton channel, linked together by a central stalk and a peripheral stalk. During catalysis, ATP synthesis in the catalytic domain of F(1) is coupled via a rotary mechanism of the central stalk subunits to proton translocation. In terms of biological role, component of the F(0) channel, it forms part of the peripheral stalk, linking F(1) to F(0). This chain is ATP synthase subunit b 1, found in Brucella anthropi (strain ATCC 49188 / DSM 6882 / CCUG 24695 / JCM 21032 / LMG 3331 / NBRC 15819 / NCTC 12168 / Alc 37) (Ochrobactrum anthropi).